A 682-amino-acid polypeptide reads, in one-letter code: Potassium-transporting ATPase ATP-binding subunit (682 aa).

4 consecutive transmembrane segments (helical) span residues 34–54 (PVMFIVWIGSLLTTCISIAMA), 62–82 (ALFSAAISGWLWVTVLFANFA), 219–239 (IALTILLIALTIVFLLATATL), and 254–274 (VLVALLVCLIPTTIGGLLSAI). Aspartate 307 functions as the 4-aspartylphosphate intermediate in the catalytic mechanism. ATP contacts are provided by residues aspartate 344, glutamate 348, 377-384 (FTAQSRMS), and lysine 395. Mg(2+)-binding residues include aspartate 518 and aspartate 522. A run of 3 helical transmembrane segments spans residues 588–608 (FAIIPAAFAATYPQLNALNIM), 616–636 (AILSAVIFNALIIVFLIPLAL), and 656–676 (IYGLGGLLVPFIGIKVIDLLL).

The protein belongs to the cation transport ATPase (P-type) (TC 3.A.3) family. Type IA subfamily. In terms of assembly, the system is composed of three essential subunits: KdpA, KdpB and KdpC.

It localises to the cell inner membrane. The catalysed reaction is K(+)(out) + ATP + H2O = K(+)(in) + ADP + phosphate + H(+). Its function is as follows. Part of the high-affinity ATP-driven potassium transport (or Kdp) system, which catalyzes the hydrolysis of ATP coupled with the electrogenic transport of potassium into the cytoplasm. This subunit is responsible for energy coupling to the transport system and for the release of the potassium ions to the cytoplasm. The chain is Potassium-transporting ATPase ATP-binding subunit from Shigella boydii serotype 18 (strain CDC 3083-94 / BS512).